The sequence spans 484 residues: Aspartyl/glutamyl-tRNA(Asn/Gln) amidotransferase subunit B (484 aa).

This sequence belongs to the GatB/GatE family. GatB subfamily. In terms of assembly, heterotrimer of A, B and C subunits.

The enzyme catalyses L-glutamyl-tRNA(Gln) + L-glutamine + ATP + H2O = L-glutaminyl-tRNA(Gln) + L-glutamate + ADP + phosphate + H(+). The catalysed reaction is L-aspartyl-tRNA(Asn) + L-glutamine + ATP + H2O = L-asparaginyl-tRNA(Asn) + L-glutamate + ADP + phosphate + 2 H(+). Allows the formation of correctly charged Asn-tRNA(Asn) or Gln-tRNA(Gln) through the transamidation of misacylated Asp-tRNA(Asn) or Glu-tRNA(Gln) in organisms which lack either or both of asparaginyl-tRNA or glutaminyl-tRNA synthetases. The reaction takes place in the presence of glutamine and ATP through an activated phospho-Asp-tRNA(Asn) or phospho-Glu-tRNA(Gln). This is Aspartyl/glutamyl-tRNA(Asn/Gln) amidotransferase subunit B from Cupriavidus metallidurans (strain ATCC 43123 / DSM 2839 / NBRC 102507 / CH34) (Ralstonia metallidurans).